Here is a 612-residue protein sequence, read N- to C-terminus: MACPF domain-containing protein NSL1 (612 aa).

Residues 5–338 form the MACPF domain; it reads NFTRLDAHSA…PPIEELHQFL (334 aa).

The protein belongs to the complement C6/C7/C8/C9 (TC 1.C.39) family.

In terms of biological role, negatively controls the salicylic acid (SA)-mediated pathway of programmed cell death in plant immunity. The sequence is that of MACPF domain-containing protein NSL1 (NSL1) from Arabidopsis thaliana (Mouse-ear cress).